The chain runs to 253 residues: Ethylene-responsive transcription factor RAP2-11 (253 aa).

The segment at residues 21–78 (KFVGVRQRPSGKWVAEIKDTTQKIRMWLGTFETAEEAARAYDEAACLLRGSNTRTNFA) is a DNA-binding region (AP2/ERF).

Belongs to the AP2/ERF transcription factor family. ERF subfamily.

It localises to the nucleus. Functionally, probably acts as a transcriptional activator. Binds to the GCC-box pathogenesis-related promoter element. May be involved in the regulation of gene expression by stress factors and by components of stress signal transduction pathways. The chain is Ethylene-responsive transcription factor RAP2-11 (RAP2-11) from Arabidopsis thaliana (Mouse-ear cress).